Here is a 622-residue protein sequence, read N- to C-terminus: Chaperone protein HscA homolog (622 aa).

The protein belongs to the heat shock protein 70 family.

Functionally, chaperone involved in the maturation of iron-sulfur cluster-containing proteins. Has a low intrinsic ATPase activity which is markedly stimulated by HscB. The sequence is that of Chaperone protein HscA homolog from Aromatoleum aromaticum (strain DSM 19018 / LMG 30748 / EbN1) (Azoarcus sp. (strain EbN1)).